Reading from the N-terminus, the 794-residue chain is Zinc finger protein 148 (794 aa).

A Glycyl lysine isopeptide (Lys-Gly) (interchain with G-Cter in SUMO2) cross-link involves residue K6. Position 51 is a phosphoserine (S51). Glycyl lysine isopeptide (Lys-Gly) (interchain with G-Cter in SUMO2) cross-links involve residues K88, K115, and K132. The segment at 171 to 193 (HVCEHCNAAFRTNYHLQRHVFIH) adopts a C2H2-type 1 zinc-finger fold. Position 194 is a phosphothreonine (T194). 2 C2H2-type zinc fingers span residues 199–221 (FQCS…EKIH) and 227–249 (FRCD…KRTH). S250 bears the Phosphoserine mark. A C2H2-type 4 zinc finger spans residues 255–278 (YQCEYCLQYFSRTDRVLKHKRMCH). Residue K291 forms a Glycyl lysine isopeptide (Lys-Gly) (interchain with G-Cter in SUMO2) linkage. The interval 298–336 (EEDSGFSTSPKDNSLPKKKRQKTEKKSSGMDKESALDKS) is disordered. 2 positions are modified to phosphoserine: S301 and S306. A Glycyl lysine isopeptide (Lys-Gly) (interchain with G-Cter in SUMO2) cross-link involves residue K308. The span at 321–336 (EKKSSGMDKESALDKS) shows a compositional bias: basic and acidic residues. K356 is covalently cross-linked (Glycyl lysine isopeptide (Lys-Gly) (interchain with G-Cter in SUMO1); alternate). K356 participates in a covalent cross-link: Glycyl lysine isopeptide (Lys-Gly) (interchain with G-Cter in SUMO2); alternate. A Glycyl lysine isopeptide (Lys-Gly) (interchain with G-Cter in SUMO2) cross-link involves residue K402. S412 bears the Phosphoserine mark. Residues K421 and K424 each participate in a glycyl lysine isopeptide (Lys-Gly) (interchain with G-Cter in SUMO2) cross-link. Positions 574–588 (NSSEVPEVTPSENVG) are enriched in polar residues. The interval 574–599 (NSSEVPEVTPSENVGSSSQASSSDKA) is disordered. K607 carries the post-translational modification N6-acetyllysine. Phosphoserine is present on residues S665 and S784.

It belongs to the krueppel C2H2-type zinc-finger protein family. As to quaternary structure, interacts with HNRNPDL. Interacts with the 5FMC complex; the interaction requires association with CHTOP. Interacts with CAVIN1. Post-translationally, sumoylated with SUMO2. Desumoylated by SENP3, resulting in the stimulation of transcription of its target genes.

The protein localises to the nucleus. In terms of biological role, involved in transcriptional regulation. Represses the transcription of a number of genes including gastrin, stromelysin and enolase. Binds to the G-rich box in the enhancer region of these genes. The protein is Zinc finger protein 148 (ZNF148) of Pongo abelii (Sumatran orangutan).